The following is a 397-amino-acid chain: Mannonate dehydratase (397 aa).

This sequence belongs to the mannonate dehydratase family. Fe(2+) serves as cofactor. Mn(2+) is required as a cofactor.

It catalyses the reaction D-mannonate = 2-dehydro-3-deoxy-D-gluconate + H2O. It participates in carbohydrate metabolism; pentose and glucuronate interconversion. Functionally, catalyzes the dehydration of D-mannonate. The sequence is that of Mannonate dehydratase from Yersinia pseudotuberculosis serotype O:1b (strain IP 31758).